We begin with the raw amino-acid sequence, 260 residues long: Thiazole synthase (260 aa).

Lys100 functions as the Schiff-base intermediate with DXP in the catalytic mechanism. 1-deoxy-D-xylulose 5-phosphate contacts are provided by residues Gly161, 187-188, and 209-210; these read AG and NT.

It belongs to the ThiG family. As to quaternary structure, homotetramer. Forms heterodimers with either ThiH or ThiS.

It localises to the cytoplasm. The catalysed reaction is [ThiS sulfur-carrier protein]-C-terminal-Gly-aminoethanethioate + 2-iminoacetate + 1-deoxy-D-xylulose 5-phosphate = [ThiS sulfur-carrier protein]-C-terminal Gly-Gly + 2-[(2R,5Z)-2-carboxy-4-methylthiazol-5(2H)-ylidene]ethyl phosphate + 2 H2O + H(+). It participates in cofactor biosynthesis; thiamine diphosphate biosynthesis. Its function is as follows. Catalyzes the rearrangement of 1-deoxy-D-xylulose 5-phosphate (DXP) to produce the thiazole phosphate moiety of thiamine. Sulfur is provided by the thiocarboxylate moiety of the carrier protein ThiS. In vitro, sulfur can be provided by H(2)S. This chain is Thiazole synthase, found in Dechloromonas aromatica (strain RCB).